A 159-amino-acid polypeptide reads, in one-letter code: Succinate dehydrogenase [ubiquinone] cytochrome b small subunit, mitochondrial (159 aa).

The N-terminal 30 residues, 1–30 (MLQTRLGLGALRQGRLLFAVKSFSTTSVAK), are a transit peptide targeting the mitochondrion. The Mitochondrial matrix segment spans residues 31 to 65 (IFPPPPQTIKGTVNDAAVFPHHSKLHGSYHWDFER). The helical transmembrane segment at 66–82 (IIAIAMVPQVMIPLFTG) threads the bilayer. Topologically, residues 83–89 (TSHPLMD) are mitochondrial intermembrane. Residues 90–109 (AALACTLITHAHLGFESCVI) traverse the membrane as a helical segment. Histidine 99 is a binding site for heme. The Mitochondrial matrix segment spans residues 110–122 (DYFPARRFKKLSP). Tyrosine 111 contacts a ubiquinone. A helical transmembrane segment spans residues 123 to 140 (LMHWILRGCTVLTLIGVY). Residues 141–159 (EFNTNDIGLTEGIKKLWKS) lie on the Mitochondrial intermembrane side of the membrane.

The protein belongs to the CybS family. Forms part of complex II containing four subunits: a flavoprotein (FP), an iron-sulfur protein (IP) and a cytochrome b composed of a large and a small subunit.

Its subcellular location is the mitochondrion inner membrane. Its pathway is carbohydrate metabolism; tricarboxylic acid cycle. Membrane-anchoring subunit of succinate dehydrogenase (SDH) that is involved in complex II of the mitochondrial electron transport chain and is responsible for transferring electrons from succinate to ubiquinone (coenzyme Q). This Schizosaccharomyces pombe (strain 972 / ATCC 24843) (Fission yeast) protein is Succinate dehydrogenase [ubiquinone] cytochrome b small subunit, mitochondrial (sdh4).